Reading from the N-terminus, the 81-residue chain is Photosystem I iron-sulfur center (81 aa).

2 consecutive 4Fe-4S ferredoxin-type domains span residues 2 to 31 (SHSVKIYDTCIGCTQCVRACPTDVLEMIPW) and 39 to 68 (IASAPRTEDCVGCKRCESACPTDFLSVRVY). [4Fe-4S] cluster-binding residues include Cys11, Cys14, Cys17, Cys21, Cys48, Cys51, Cys54, and Cys58.

As to quaternary structure, the eukaryotic PSI reaction center is composed of at least 11 subunits. [4Fe-4S] cluster is required as a cofactor.

The protein resides in the plastid. It localises to the chloroplast thylakoid membrane. It catalyses the reaction reduced [plastocyanin] + hnu + oxidized [2Fe-2S]-[ferredoxin] = oxidized [plastocyanin] + reduced [2Fe-2S]-[ferredoxin]. Its function is as follows. Apoprotein for the two 4Fe-4S centers FA and FB of photosystem I (PSI); essential for photochemical activity. FB is the terminal electron acceptor of PSI, donating electrons to ferredoxin. The C-terminus interacts with PsaA/B/D and helps assemble the protein into the PSI complex. Required for binding of PsaD and PsaE to PSI. PSI is a plastocyanin-ferredoxin oxidoreductase, converting photonic excitation into a charge separation, which transfers an electron from the donor P700 chlorophyll pair to the spectroscopically characterized acceptors A0, A1, FX, FA and FB in turn. The protein is Photosystem I iron-sulfur center of Vitis vinifera (Grape).